The chain runs to 157 residues: Small ribosomal subunit protein uS7 (157 aa).

It belongs to the universal ribosomal protein uS7 family. In terms of assembly, part of the 30S ribosomal subunit. Contacts proteins S9 and S11.

Its function is as follows. One of the primary rRNA binding proteins, it binds directly to 16S rRNA where it nucleates assembly of the head domain of the 30S subunit. Is located at the subunit interface close to the decoding center, probably blocks exit of the E-site tRNA. This chain is Small ribosomal subunit protein uS7, found in Roseiflexus sp. (strain RS-1).